The sequence spans 479 residues: UDP-N-acetylmuramoyl-L-alanyl-D-glutamate--2,6-diaminopimelate ligase (479 aa).

Serine 21 provides a ligand contact to UDP-N-acetyl-alpha-D-muramoyl-L-alanyl-D-glutamate. 98–104 contributes to the ATP binding site; sequence GTNGKSS. Residues 144-145, serine 171, glutamine 177, and arginine 179 each bind UDP-N-acetyl-alpha-D-muramoyl-L-alanyl-D-glutamate; that span reads TT. The residue at position 211 (lysine 211) is an N6-carboxylysine. Meso-2,6-diaminopimelate is bound by residues arginine 372, 396–399, glycine 446, and glutamate 450; that span reads DNPR. The Meso-diaminopimelate recognition motif signature appears at 396–399; the sequence is DNPR.

It belongs to the MurCDEF family. MurE subfamily. Mg(2+) serves as cofactor. Post-translationally, carboxylation is probably crucial for Mg(2+) binding and, consequently, for the gamma-phosphate positioning of ATP.

The protein localises to the cytoplasm. The enzyme catalyses UDP-N-acetyl-alpha-D-muramoyl-L-alanyl-D-glutamate + meso-2,6-diaminopimelate + ATP = UDP-N-acetyl-alpha-D-muramoyl-L-alanyl-gamma-D-glutamyl-meso-2,6-diaminopimelate + ADP + phosphate + H(+). The protein operates within cell wall biogenesis; peptidoglycan biosynthesis. Catalyzes the addition of meso-diaminopimelic acid to the nucleotide precursor UDP-N-acetylmuramoyl-L-alanyl-D-glutamate (UMAG) in the biosynthesis of bacterial cell-wall peptidoglycan. In Rickettsia conorii (strain ATCC VR-613 / Malish 7), this protein is UDP-N-acetylmuramoyl-L-alanyl-D-glutamate--2,6-diaminopimelate ligase.